A 150-amino-acid polypeptide reads, in one-letter code: SsrA-binding protein (150 aa).

The disordered stretch occupies residues 129 to 150; it reads ETEKQRDWQREKSRIMKGGSKE.

It belongs to the SmpB family.

It is found in the cytoplasm. Functionally, required for rescue of stalled ribosomes mediated by trans-translation. Binds to transfer-messenger RNA (tmRNA), required for stable association of tmRNA with ribosomes. tmRNA and SmpB together mimic tRNA shape, replacing the anticodon stem-loop with SmpB. tmRNA is encoded by the ssrA gene; the 2 termini fold to resemble tRNA(Ala) and it encodes a 'tag peptide', a short internal open reading frame. During trans-translation Ala-aminoacylated tmRNA acts like a tRNA, entering the A-site of stalled ribosomes, displacing the stalled mRNA. The ribosome then switches to translate the ORF on the tmRNA; the nascent peptide is terminated with the 'tag peptide' encoded by the tmRNA and targeted for degradation. The ribosome is freed to recommence translation, which seems to be the essential function of trans-translation. The chain is SsrA-binding protein from Cupriavidus pinatubonensis (strain JMP 134 / LMG 1197) (Cupriavidus necator (strain JMP 134)).